Here is a 358-residue protein sequence, read N- to C-terminus: 3-dehydroquinate synthase (358 aa).

NAD(+) contacts are provided by residues 105–109, 129–130, K142, K151, and 169–172; these read GVVGD, TT, and TLKT. E184, H245, and H262 together coordinate Zn(2+).

The protein belongs to the sugar phosphate cyclases superfamily. Dehydroquinate synthase family. The cofactor is NAD(+). Co(2+) serves as cofactor. Requires Zn(2+) as cofactor.

The protein localises to the cytoplasm. It catalyses the reaction 7-phospho-2-dehydro-3-deoxy-D-arabino-heptonate = 3-dehydroquinate + phosphate. Its pathway is metabolic intermediate biosynthesis; chorismate biosynthesis; chorismate from D-erythrose 4-phosphate and phosphoenolpyruvate: step 2/7. Catalyzes the conversion of 3-deoxy-D-arabino-heptulosonate 7-phosphate (DAHP) to dehydroquinate (DHQ). This is 3-dehydroquinate synthase from Enterococcus faecalis (strain ATCC 47077 / OG1RF).